Here is a 1415-residue protein sequence, read N- to C-terminus: DNA-directed RNA polymerase subunit beta' (1415 aa).

Zn(2+) contacts are provided by cysteine 71, cysteine 73, cysteine 86, and cysteine 89. Mg(2+) contacts are provided by aspartate 461, aspartate 463, and aspartate 465. Cysteine 815, cysteine 889, cysteine 896, and cysteine 899 together coordinate Zn(2+).

Belongs to the RNA polymerase beta' chain family. The RNAP catalytic core consists of 2 alpha, 1 beta, 1 beta' and 1 omega subunit. When a sigma factor is associated with the core the holoenzyme is formed, which can initiate transcription. Requires Mg(2+) as cofactor. It depends on Zn(2+) as a cofactor.

The catalysed reaction is RNA(n) + a ribonucleoside 5'-triphosphate = RNA(n+1) + diphosphate. DNA-dependent RNA polymerase catalyzes the transcription of DNA into RNA using the four ribonucleoside triphosphates as substrates. In Haemophilus influenzae (strain ATCC 51907 / DSM 11121 / KW20 / Rd), this protein is DNA-directed RNA polymerase subunit beta'.